We begin with the raw amino-acid sequence, 229 residues long: Small ribosomal subunit protein uS3 (229 aa).

In terms of domain architecture, KH type-2 spans 39–107; the sequence is VRQYLTEKLK…TAQINIAEIR (69 aa).

The protein belongs to the universal ribosomal protein uS3 family. In terms of assembly, part of the 30S ribosomal subunit. Forms a tight complex with proteins S10 and S14.

Functionally, binds the lower part of the 30S subunit head. Binds mRNA in the 70S ribosome, positioning it for translation. This chain is Small ribosomal subunit protein uS3, found in Shewanella denitrificans (strain OS217 / ATCC BAA-1090 / DSM 15013).